We begin with the raw amino-acid sequence, 2726 residues long: Filamin-C (2726 aa).

The interval 1-260 (MMNNSNYSDA…VMTYLSQFPK (260 aa)) is actin-binding. Ser-5 is modified (phosphoserine). Calponin-homology (CH) domains are found at residues 37 to 143 (KIQQ…LHYS) and 160 to 263 (QTPK…KAKL). 15 Filamin repeats span residues 271–369 (SKQL…EVNV), 371–469 (MALG…PVHV), 470–566 (AEAC…EVQV), 567–659 (SPEA…IAHI), 663–759 (PPDC…RVNV), 760–862 (GEGS…HIKV), 863–961 (DPSH…VVNV), 962–1057 (APPL…AVEG), 1058–1150 (VLPP…KATI), 1151–1245 (QPVF…RVHV), 1246–1345 (QPAV…RVGV), 1346–1438 (TEGC…RVPV), 1439–1534 (KDVV…KIKV), 1535–1631 (LPAH…RIHA), and 1636–1735 (DASK…HVLA). Arg-1003 is modified (omega-N-methylarginine). Phosphoserine occurs at positions 1162 and 1339. Positions 1736–1759 (CDPLPHVEEPAEVLQLHQPYAPLR) are hinge 1. 4 Filamin repeats span residues 1760 to 1854 (PGTC…LQFY), 1855 to 1947 (VDAI…TAKI), 1948 to 2034 (TGDD…KILV), and 2037 to 2129 (SEIG…TVKV). The residue at position 2043 (Ser-2043) is a Phosphoserine. An intradomain insert; mediate targeting to Z lines region spans residues 2163–2244 (GNWFQMVSAQ…FGSITRQQEG (82 aa)). Positions 2194–2210 (ISKTRGGETKREVRVEE) are enriched in basic and acidic residues. Residues 2194–2214 (ISKTRGGETKREVRVEESTQV) form a disordered region. 2 positions are modified to phosphoserine: Ser-2234 and Ser-2237. Thr-2239 carries the phosphothreonine modification. Residues 2241 to 2260 (QQEGEASSQDMTAQVTSPSG) show a composition bias toward polar residues. The disordered stretch occupies residues 2241–2261 (QQEGEASSQDMTAQVTSPSGK). The Filamin 20; mediates interaction with XIRP1 repeat unit spans residues 2245–2307 (EASSQDMTAQ…VPGSPFQFTV (63 aa)). 3 Filamin repeats span residues 2310 to 2402 (LGEG…VVPV), 2404 to 2497 (SLSD…KIRV), and 2501 to 2593 (SQAG…KAKV). Residues 2404-2725 (SLSDDARRLT…VPGSPFKVNV (322 aa)) form an interaction with INPPL1 region. Residues Ser-2587, Ser-2618, Ser-2621, Ser-2633, Ser-2715, and Ser-2719 each carry the phosphoserine modification. The segment at 2594-2630 (TGPRLSGGHSLHETSTVLVETVTKSSSSRGASYSSIP) is hinge 2. Residues 2594–2726 (TGPRLSGGHS…PGSPFKVNVP (133 aa)) form a self-association site, tail region. The stretch at 2631 to 2725 (KFSSDASKVV…VPGSPFKVNV (95 aa)) is one Filamin 24 repeat.

Belongs to the filamin family. As to quaternary structure, homodimer; the filamin repeat 24 and the second hinge domain are important for dimer formation. Interacts with FLNB, KCND2, INPPL1, ITGB1A, MYOT, MYOZ1 and MYOZ3. Interacts with sarcoglycans SGCD and SGCG. Interacts (via filament repeats 17-18, 20-21 and 24) with USP25 (isoform USP25m only). Interacts with FBLIM1. Interacts with KY. Interacts with IGFN1. Interacts with MICALL2. Interacts with XIRP1; this interaction is mediated by filamin 20 repeat. Interacts with ANK3. Interacts with SYNPO2. In terms of processing, ubiquitinated by FBXL22, leading to proteasomal degradation.

It is found in the cytoplasm. It localises to the membrane. Its subcellular location is the cytoskeleton. The protein resides in the myofibril. The protein localises to the sarcomere. It is found in the z line. Muscle-specific filamin, which plays a central role in sarcomere assembly and organization. Critical for normal myogenesis, it probably functions as a large actin-cross-linking protein with structural functions at the Z lines in muscle cells. May be involved in reorganizing the actin cytoskeleton in response to signaling events. The sequence is that of Filamin-C (Flnc) from Rattus norvegicus (Rat).